The chain runs to 107 residues: Protein Asterix (107 aa).

The span at 1–15 shows a compositional bias: polar residues; sequence MSHSHGNASSVNDPR. The segment at 1 to 25 is disordered; that stretch reads MSHSHGNASSVNDPRQPSAAKPYIP. The helical transmembrane segment at 82–98 threads the bilayer; the sequence is ISMAMMFAIMGLVTNYL.

This sequence belongs to the Asterix family.

The protein localises to the membrane. This Arabidopsis thaliana (Mouse-ear cress) protein is Protein Asterix.